Here is a 1707-residue protein sequence, read N- to C-terminus: Latrophilin Cirl (1707 aa).

Residues methionine 1–arginine 767 are Extracellular-facing. Residues alanine 25–isoleucine 114 form the SUEL-type lectin domain. Asparagine 142 carries an N-linked (GlcNAc...) asparagine glycan. The disordered stretch occupies residues glycine 176 to glycine 301. 2 stretches are compositionally biased toward polar residues: residues threonine 185 to alanine 198 and asparagine 256 to isoleucine 265. N-linked (GlcNAc...) asparagine glycosylation is present at asparagine 256. Over residues aspartate 275–serine 285 the composition is skewed to low complexity. Asparagine 302, asparagine 341, asparagine 398, asparagine 655, asparagine 703, and asparagine 730 each carry an N-linked (GlcNAc...) asparagine glycan. Residues tyrosine 376–serine 400 form a disordered region. The 194-residue stretch at arginine 561 to histidine 754 folds into the GAIN-B domain. Disulfide bonds link cysteine 709-cysteine 736 and cysteine 724-cysteine 738. Residues cysteine 709–histidine 754 are GPS. Residues isoleucine 768–leucine 788 traverse the membrane as a helical segment. Residues lysine 789–threonine 801 are Cytoplasmic-facing. Residues serine 802 to isoleucine 822 form a helical membrane-spanning segment. Residues glutamate 823–serine 828 are Extracellular-facing. The helical transmembrane segment at isoleucine 829–phenylalanine 849 threads the bilayer. The Cytoplasmic portion of the chain corresponds to cysteine 850 to valine 875. Residues asparagine 876–isoleucine 896 form a helical membrane-spanning segment. Residues aspartate 897–phenylalanine 920 lie on the Extracellular side of the membrane. Residues valine 921 to isoleucine 941 form a helical membrane-spanning segment. The Cytoplasmic portion of the chain corresponds to leucine 942–serine 968. The chain crosses the membrane as a helical span at residues phenylalanine 969–alanine 989. Residues lysine 990 to tyrosine 999 are Extracellular-facing. Residues glycine 1000–isoleucine 1020 form a helical membrane-spanning segment. Over glutamine 1021–lysine 1707 the chain is Cytoplasmic. At serine 1156 the chain carries Phosphoserine. 2 disordered regions span residues alanine 1169–tyrosine 1188 and lysine 1236–leucine 1260. The span at glutamine 1172–glutamine 1181 shows a compositional bias: low complexity. Serine 1255 and serine 1262 each carry phosphoserine. A compositionally biased stretch (low complexity) spans glutamine 1316 to leucine 1326. Disordered regions lie at residues glutamine 1316–glutamine 1335, glycine 1450–arginine 1538, alanine 1563–glycine 1582, and glycine 1612–histidine 1687. Phosphoserine occurs at positions 1327 and 1328. Residues glycine 1456 to arginine 1481 are compositionally biased toward low complexity. 2 stretches are compositionally biased toward acidic residues: residues aspartate 1489–threonine 1503 and cysteine 1513–aspartate 1526. Residues glutamine 1635–glutamine 1650 are compositionally biased toward polar residues. The span at serine 1651 to histidine 1673 shows a compositional bias: low complexity. Basic residues predominate over residues proline 1674–arginine 1686.

It belongs to the G-protein coupled receptor 2 family. LN-TM7 subfamily. As to quaternary structure, forms a heterodimer, consisting of a large extracellular region non-covalently linked to a seven-transmembrane moiety. Post-translationally, proteolytically cleaved into 2 subunits, an extracellular subunit and a seven-transmembrane subunit.

It localises to the cell membrane. This Drosophila yakuba (Fruit fly) protein is Latrophilin Cirl.